We begin with the raw amino-acid sequence, 245 residues long: Outer membrane protein assembly factor BamD (245 aa).

An N-terminal signal peptide occupies residues 1-19 (MTRMKYLVAAATLSLFLAG). Cys20 carries the N-palmitoyl cysteine lipid modification. The S-diacylglycerol cysteine moiety is linked to residue Cys20.

The protein belongs to the BamD family. Part of the Bam complex, which is composed of the outer membrane protein BamA, and four lipoproteins BamB, BamC, BamD and BamE.

It localises to the cell outer membrane. Its function is as follows. Part of the outer membrane protein assembly complex, which is involved in assembly and insertion of beta-barrel proteins into the outer membrane. Constitutes, with BamA, the core component of the assembly machinery. The sequence is that of Outer membrane protein assembly factor BamD from Escherichia coli O157:H7.